We begin with the raw amino-acid sequence, 362 residues long: Methylthioribose-1-phosphate isomerase (362 aa).

D252 serves as the catalytic Proton donor.

This sequence belongs to the eIF-2B alpha/beta/delta subunits family. MtnA subfamily.

The protein localises to the cytoplasm. It localises to the nucleus. It carries out the reaction 5-(methylsulfanyl)-alpha-D-ribose 1-phosphate = 5-(methylsulfanyl)-D-ribulose 1-phosphate. It participates in amino-acid biosynthesis; L-methionine biosynthesis via salvage pathway; L-methionine from S-methyl-5-thio-alpha-D-ribose 1-phosphate: step 1/6. Functionally, catalyzes the interconversion of methylthioribose-1-phosphate (MTR-1-P) into methylthioribulose-1-phosphate (MTRu-1-P). In Drosophila virilis (Fruit fly), this protein is Methylthioribose-1-phosphate isomerase.